Consider the following 567-residue polypeptide: Glutamine-dependent NAD(+) synthetase (567 aa).

In terms of domain architecture, CN hydrolase spans 2–242 (LNLTLAQLNF…EDILTVTLDL (241 aa)). The Proton acceptor; for glutaminase activity role is filled by glutamate 41. The active-site For glutaminase activity is the lysine 109. Residue tyrosine 115 participates in L-glutamine binding. Cysteine 145 serves as the catalytic Nucleophile; for glutaminase activity. Positions 172 and 178 each coordinate L-glutamine. The tract at residues 287 to 567 (PKEEEEIYAA…RMPVTNKFFK (281 aa)) is ligase. 316–323 (GLSGGIDS) contacts ATP. Asparagine 399 is a binding site for deamido-NAD(+). Threonine 423 provides a ligand contact to ATP. Positions 428 and 538 each coordinate deamido-NAD(+).

The protein in the C-terminal section; belongs to the NAD synthetase family.

The catalysed reaction is deamido-NAD(+) + L-glutamine + ATP + H2O = L-glutamate + AMP + diphosphate + NAD(+) + H(+). It participates in cofactor biosynthesis; NAD(+) biosynthesis; NAD(+) from deamido-NAD(+) (L-Gln route): step 1/1. In terms of biological role, catalyzes the ATP-dependent amidation of deamido-NAD to form NAD. Uses L-glutamine as a nitrogen source. The protein is Glutamine-dependent NAD(+) synthetase of Aquifex aeolicus (strain VF5).